A 634-amino-acid polypeptide reads, in one-letter code: Phosphatase and actin regulator 2 (634 aa).

4 disordered regions span residues 1–32, 84–344, 412–471, and 485–508; these read MDNA…KRKG, LPDQ…PLED, PQLL…ALAS, and NRPS…ERQE. Residue Asp2 is the site of N-myristoyl glycine attachment. Over residues 13–26 the composition is skewed to polar residues; sequence IANSDGPTAGSQTP. The residue at position 16 (Ser16) is a Phosphoserine. Position 25 is a phosphothreonine (Thr25). One copy of the RPEL 1 repeat lies at 60–85; it reads AVLERKISTRQSREELIRRGVLKELP. 2 stretches are compositionally biased toward basic and acidic residues: residues 108 to 120 and 137 to 147; these read ESTR…KSEE and EDKKENTENHS. Pro residues predominate over residues 153–162; sequence PALPPSAPPK. Composition is skewed to low complexity over residues 231–247 and 276–290; these read GSKA…SSRP and TSHL…GTSD. The span at 291–304 shows a compositional bias: basic and acidic residues; it reads LKGEPAETRVESFK. The span at 324–341 shows a compositional bias: pro residues; the sequence is VPPPPVAPAPSPLAPPLP. The residue at position 423 (Ser423) is a Phosphoserine. Positions 452–464 are enriched in acidic residues; that stretch reads TDDEDEDEDEDGS. RPEL repeat units follow at residues 477-502, 515-540, and 553-578; these read DTLA…QRTS, TKLV…KQKN, and RRLS…RFNE. The segment covering 488 to 508 has biased composition (basic and acidic residues); it reads SKKELEDKNILQRTSEEERQE. 2 positions are modified to phosphoserine: Ser522 and Ser560.

The protein belongs to the phosphatase and actin regulator family. Binds PPP1CA and actin.

It is found in the membrane. In Homo sapiens (Human), this protein is Phosphatase and actin regulator 2 (PHACTR2).